The primary structure comprises 274 residues: Penicillin-insensitive murein endopeptidase (274 aa).

A signal peptide spans 1 to 19 (MKKTVIALLAWFVSSASLA). Intrachain disulfides connect cysteine 44–cysteine 265, cysteine 187–cysteine 235, and cysteine 216–cysteine 223. Zn(2+) is bound by residues histidine 110, histidine 113, aspartate 120, aspartate 147, histidine 150, and histidine 211. Residues 225–274 (DQPLPPPGDGCGAELQSWFEPPKPGTTKPEKKTPPPLPPSCQALLDEHVL) are disordered.

This sequence belongs to the peptidase M74 family. Dimer. Zn(2+) serves as cofactor.

Its subcellular location is the periplasm. Its function is as follows. Murein endopeptidase that cleaves the D-alanyl-meso-2,6-diamino-pimelyl amide bond that connects peptidoglycan strands. Likely plays a role in the removal of murein from the sacculus. This Salmonella paratyphi C (strain RKS4594) protein is Penicillin-insensitive murein endopeptidase.